Consider the following 133-residue polypeptide: Small ribosomal subunit protein uS8 (133 aa).

This sequence belongs to the universal ribosomal protein uS8 family. As to quaternary structure, part of the 30S ribosomal subunit. Contacts proteins S5 and S12.

In terms of biological role, one of the primary rRNA binding proteins, it binds directly to 16S rRNA central domain where it helps coordinate assembly of the platform of the 30S subunit. The polypeptide is Small ribosomal subunit protein uS8 (Leptospira borgpetersenii serovar Hardjo-bovis (strain JB197)).